Consider the following 546-residue polypeptide: Chaperonin GroEL (546 aa).

ATP contacts are provided by residues 29–32, Lys-50, 86–90, Gly-414, 478–480, and Asp-494; these read TLGP, DGTTT, and NAA.

The protein belongs to the chaperonin (HSP60) family. Forms a cylinder of 14 subunits composed of two heptameric rings stacked back-to-back. Interacts with the co-chaperonin GroES.

The protein resides in the cytoplasm. The catalysed reaction is ATP + H2O + a folded polypeptide = ADP + phosphate + an unfolded polypeptide.. Its function is as follows. Together with its co-chaperonin GroES, plays an essential role in assisting protein folding. The GroEL-GroES system forms a nano-cage that allows encapsulation of the non-native substrate proteins and provides a physical environment optimized to promote and accelerate protein folding. The sequence is that of Chaperonin GroEL from Psychrobacter arcticus (strain DSM 17307 / VKM B-2377 / 273-4).